The primary structure comprises 393 residues: Envelope glycoprotein D (393 aa).

The signal sequence occupies residues 1–25; that stretch reads MGGAAARLGAVILFVVIVGLHGVRG. Residues 25–57 are interaction with TNFRSF14; the sequence is GKYALADASLKMADPNRFRGKDLPVLDQLTDPP. The Virion surface segment spans residues 26–338; it reads KYALADASLK…PYHPPATPNN (313 aa). H64 is a Zn(2+) binding site. 3 disulfides stabilise this stretch: C90–C213, C130–C226, and C142–C151. N-linked (GlcNAc...) asparagine; by host glycosylation is found at N118 and N145. Residue D239 participates in Zn(2+) binding. Residues 260–304 are profusion; that stretch reads LKIAGWHGPRAPYTSTLLPPELPETPNATQPELAPEDPEDSALLE. The disordered stretch occupies residues 273–300; it reads TSTLLPPELPETPNATQPELAPEDPEDS. Residue N286 is glycosylated (N-linked (GlcNAc...) asparagine; by host). A helical membrane pass occupies residues 339 to 363; that stretch reads MGLIAGAVGGSLLAALVICGIVYWM. Residues 364–393 lie on the Intravirion side of the membrane; it reads RRRTRKAPKRIRLPHIREDDQPSSHQPLFY.

The protein belongs to the herpesviridae glycoprotein D family. In terms of assembly, homodimer. Interacts with host receptor TNFRSF14. Interacts with host receptor NECTIN1. Interacts (via profusion domain) with gB; this interaction occurs in the absence of gH/gL. Interacts (via profusion domain) with gH/gL heterodimer; this interaction occurs in the absence of gB. Associates with the gB-gH/gL-gD complex. Interacts (via C-terminus) with UL11 tegument protein. Interacts with host RSAD2.

It is found in the virion membrane. The protein resides in the host Golgi apparatus. Envelope glycoprotein that binds to the host cell entry receptors NECTIN1, TNFRSF14/HVEM and 3-O-sulfated heparan sulfate, promoting the virus entry into host cells. May trigger fusion with host membrane, by recruiting the fusion machinery composed of gB and gH/gL. This Homo sapiens (Human) protein is Envelope glycoprotein D (gD).